A 765-amino-acid chain; its full sequence is Probable dipeptidyl peptidase 4 (765 aa).

The signal sequence occupies residues M1–A14. N-linked (GlcNAc...) asparagine glycosylation is found at N35, N78, N101, N110, N169, N218, N465, and N490. S613 serves as the catalytic Charge relay system. Residue N665 is glycosylated (N-linked (GlcNAc...) asparagine). Catalysis depends on charge relay system residues D690 and H725.

The protein belongs to the peptidase S9B family.

Its subcellular location is the secreted. The enzyme catalyses Release of an N-terminal dipeptide, Xaa-Yaa-|-Zaa-, from a polypeptide, preferentially when Yaa is Pro, provided Zaa is neither Pro nor hydroxyproline.. In terms of biological role, extracellular dipeptidyl-peptidase which removes N-terminal dipeptides sequentially from polypeptides having unsubstituted N-termini provided that the penultimate residue is proline. Contributes to pathogenicity. In Aspergillus fumigatus (strain CBS 144.89 / FGSC A1163 / CEA10) (Neosartorya fumigata), this protein is Probable dipeptidyl peptidase 4 (dpp4).